The chain runs to 238 residues: 6-phosphogluconolactonase (238 aa).

This sequence belongs to the glucosamine/galactosamine-6-phosphate isomerase family. 6-phosphogluconolactonase subfamily.

It carries out the reaction 6-phospho-D-glucono-1,5-lactone + H2O = 6-phospho-D-gluconate + H(+). Its pathway is carbohydrate degradation; pentose phosphate pathway; D-ribulose 5-phosphate from D-glucose 6-phosphate (oxidative stage): step 2/3. Hydrolysis of 6-phosphogluconolactone to 6-phosphogluconate. This Pseudomonas aeruginosa (strain ATCC 15692 / DSM 22644 / CIP 104116 / JCM 14847 / LMG 12228 / 1C / PRS 101 / PAO1) protein is 6-phosphogluconolactonase (pgl).